A 65-amino-acid polypeptide reads, in one-letter code: Keratin-associated protein 23-1 (65 aa).

As to quaternary structure, interacts with hair keratins.

Its function is as follows. In the hair cortex, hair keratin intermediate filaments are embedded in an interfilamentous matrix, consisting of hair keratin-associated proteins (KRTAP), which are essential for the formation of a rigid and resistant hair shaft through their extensive disulfide bond cross-linking with abundant cysteine residues of hair keratins. The matrix proteins include the high-sulfur and high-glycine-tyrosine keratins. The polypeptide is Keratin-associated protein 23-1 (KRTAP23-1) (Homo sapiens (Human)).